Consider the following 64-residue polypeptide: Large ribosomal subunit protein bL35 (64 aa).

A disordered region spans residues 20-42 (GRVKREKMYGSHNLEKKNRKRTR). The span at 25 to 35 (EKMYGSHNLEK) shows a compositional bias: basic and acidic residues.

It belongs to the bacterial ribosomal protein bL35 family.

This chain is Large ribosomal subunit protein bL35, found in Chlorobium phaeobacteroides (strain BS1).